Reading from the N-terminus, the 396-residue chain is Cell division protein DivIB (396 aa).

Disordered stretches follow at residues 1-23 (MSKDKKNEDKETLEELKELSEWQ) and 37-116 (EVAL…ATKE). Over 1–130 (MSKDKKNEDK…AKIPGIHILR (130 aa)) the chain is Cytoplasmic. Composition is skewed to basic and acidic residues over residues 37-65 (EVALAEEKEKERQARMGEESEKSEDKQDQ) and 75-116 (ESAK…ATKE). Residues 131 to 151 (AFTILFPSLLLLIVSAYLLSP) form a helical membrane-spanning segment. The Extracellular segment spans residues 152–396 (YATMKDIRVE…NQTNQRSSRR (245 aa)). Positions 153–223 (ATMKDIRVEG…TKFTIKVKEY (71 aa)) constitute a POTRA domain. Basic and acidic residues predominate over residues 361–385 (KAKQEAKEAEKKQEEEQKKQEEESN). The tract at residues 361–396 (KAKQEAKEAEKKQEEEQKKQEEESNRNQTNQRSSRR) is disordered. The segment covering 386-396 (RNQTNQRSSRR) has biased composition (low complexity).

It belongs to the FtsQ/DivIB family. DivIB subfamily.

The protein resides in the cell membrane. In terms of biological role, cell division protein that may be involved in stabilizing or promoting the assembly of the division complex. The sequence is that of Cell division protein DivIB from Streptococcus pneumoniae (strain ATCC BAA-255 / R6).